A 47-amino-acid polypeptide reads, in one-letter code: Ruminococcin-A (47 aa).

The first 23 residues, 1–23, serve as a signal peptide directing secretion; the sequence is MRNDVLTLTNPMEENELEQILGG. A 2,3-didehydrobutyrine mark is found at threonine 30 and threonine 39. Residues 30–35 constitute a cross-link (beta-methyllanthionine (Thr-Cys)); that stretch reads TISHEC. The segment at residues 32–46 is a cross-link (lanthionine (Ser-Cys)); that stretch reads SHECNMNTWQFLFTC. The segment at residues 45-47 is a cross-link (beta-methyllanthionine (Thr-Cys)); that stretch reads TCC.

Belongs to the type A lantibiotic family. Post-translationally, maturation of lantibiotics involves the enzymatic conversion of Thr, and Ser into dehydrated AA and the formation of thioether bonds with cysteine. This is followed by membrane translocation and cleavage of the modified precursor.

Its subcellular location is the secreted. Functionally, lanthionine-containing peptide antibiotic (lantibiotic) active on Gram-positive bacteria. The bactericidal activity of lantibiotics is based on depolarization of energized bacterial cytoplasmic membranes, initiated by the formation of aqueous transmembrane pores. Ruminococcin A is a broad spectrum bacteriocin exhibiting activity against a wide range of pathogenic clostridia and B.longum. The sequence is that of Ruminococcin-A (rumA1) from Blautia hansenii (Ruminococcus hansenii).